A 113-amino-acid chain; its full sequence is Large ribosomal subunit protein uL24 (113 aa).

It belongs to the universal ribosomal protein uL24 family. In terms of assembly, part of the 50S ribosomal subunit.

One of two assembly initiator proteins, it binds directly to the 5'-end of the 23S rRNA, where it nucleates assembly of the 50S subunit. In terms of biological role, one of the proteins that surrounds the polypeptide exit tunnel on the outside of the subunit. The sequence is that of Large ribosomal subunit protein uL24 from Rickettsia typhi (strain ATCC VR-144 / Wilmington).